The primary structure comprises 195 residues: Elongation factor Ts (195 aa).

An involved in Mg(2+) ion dislocation from EF-Tu region spans residues 81 to 84 (TDFV).

Belongs to the EF-Ts family.

It is found in the cytoplasm. Associates with the EF-Tu.GDP complex and induces the exchange of GDP to GTP. It remains bound to the aminoacyl-tRNA.EF-Tu.GTP complex up to the GTP hydrolysis stage on the ribosome. This chain is Elongation factor Ts, found in Rubrobacter xylanophilus (strain DSM 9941 / JCM 11954 / NBRC 16129 / PRD-1).